Consider the following 149-residue polypeptide: Large-conductance mechanosensitive channel (149 aa).

Helical transmembrane passes span 8 to 28 (FIMR…SAFT) and 74 to 94 (IGSV…LFLI).

It belongs to the MscL family. In terms of assembly, homopentamer.

It is found in the cell membrane. Functionally, channel that opens in response to stretch forces in the membrane lipid bilayer. May participate in the regulation of osmotic pressure changes within the cell. This chain is Large-conductance mechanosensitive channel, found in Enterococcus faecalis (strain ATCC 700802 / V583).